The following is a 305-amino-acid chain: 2-oxoacid:ferredoxin oxidoreductase subunit beta (305 aa).

3 residues coordinate [4Fe-4S] cluster: C12, C15, and C46. Thiamine diphosphate-binding positions include 44–47 (IGCS) and H65. D90 contributes to the Mg(2+) binding site. Thiamine diphosphate is bound at residue 91-92 (GD). Residues N118 and V120 each contribute to the Mg(2+) site. Thiamine diphosphate is bound at residue 122–123 (GL). Position 197 (C197) interacts with [4Fe-4S] cluster.

Heterodimer composed of an alpha and a beta subunit. [4Fe-4S] cluster serves as cofactor. Thiamine diphosphate is required as a cofactor. The cofactor is Mg(2+).

It is found in the cytoplasm. It carries out the reaction a 2-oxocarboxylate + 2 oxidized [2Fe-2S]-[ferredoxin] + CoA = an acyl-CoA + 2 reduced [2Fe-2S]-[ferredoxin] + CO2 + H(+). In terms of biological role, catalyzes the coenzyme A-dependent oxidative decarboxylation of different 2-oxoacids such as 2-oxoglutarate, pyruvate and 2-oxobutyrate to form their CoA derivatives. This is 2-oxoacid:ferredoxin oxidoreductase subunit beta from Sulfolobus sp.